A 513-amino-acid chain; its full sequence is Light-independent protochlorophyllide reductase subunit B (513 aa).

Asp-36 is a binding site for [4Fe-4S] cluster. The active-site Proton donor is the Asp-274. 409–410 serves as a coordination point for substrate; that stretch reads GL. The disordered stretch occupies residues 426–457; that stretch reads DAAGPSHHGGHSPKPQAAEPAPQAAPQPENTG. Residues 440-454 are compositionally biased toward low complexity; that stretch reads PQAAEPAPQAAPQPE.

It belongs to the ChlB/BchB/BchZ family. In terms of assembly, protochlorophyllide reductase is composed of three subunits; BchL, BchN and BchB. Forms a heterotetramer of two BchB and two BchN subunits. It depends on [4Fe-4S] cluster as a cofactor.

It carries out the reaction chlorophyllide a + oxidized 2[4Fe-4S]-[ferredoxin] + 2 ADP + 2 phosphate = protochlorophyllide a + reduced 2[4Fe-4S]-[ferredoxin] + 2 ATP + 2 H2O. It functions in the pathway porphyrin-containing compound metabolism; bacteriochlorophyll biosynthesis (light-independent). Component of the dark-operative protochlorophyllide reductase (DPOR) that uses Mg-ATP and reduced ferredoxin to reduce ring D of protochlorophyllide (Pchlide) to form chlorophyllide a (Chlide). This reaction is light-independent. The NB-protein (BchN-BchB) is the catalytic component of the complex. This Roseobacter denitrificans (strain ATCC 33942 / OCh 114) (Erythrobacter sp. (strain OCh 114)) protein is Light-independent protochlorophyllide reductase subunit B.